The sequence spans 462 residues: Cysteine proteinase RD21A (462 aa).

The first 21 residues, 1-21 (MGFLKPTMAILFLAMVAVSSA), serve as a signal peptide directing secretion. Positions 22–136 (VDMSIISYDE…LRYEARVGDE (115 aa)) are cleaved as a propeptide — activation peptide. Residue asparagine 90 is glycosylated (N-linked (GlcNAc...) asparagine). 5 disulfides stabilise this stretch: cysteine 158–cysteine 200, cysteine 192–cysteine 233, cysteine 291–cysteine 342, cysteine 375–cysteine 387, and cysteine 381–cysteine 402. Residue cysteine 161 is part of the active site. Active-site residues include histidine 297 and asparagine 317. The propeptide at 353 to 462 (KNGENPPNPG…FWSQGRKNIA (110 aa)) is removed in mature form. A glycan (N-linked (GlcNAc...) asparagine) is linked at asparagine 414.

This sequence belongs to the peptidase C1 family. Interacts with SERPIN1. Interacts with PRN2. Interacts with WSCP. Interacts with TZF4, TZF5 and TZF6.

It localises to the vacuole. The protein localises to the golgi apparatus. The protein resides in the cytoplasm. It is found in the stress granule. Its subcellular location is the P-body. With respect to regulation, inhibited by the cysteine protease inhibitor E64 (L-trans-epoxysuccinyl-leucylamide-(4-guanido)-butane). Functionally, cysteine protease that plays a role in immunity, senescence, and biotic and abiotic stresses. Involved in immunity against the necrotrophic fungal pathogen Botrytis cinerea. Involved in elicitor-stimulated programmed cell death (PCD). During infection by the necrotrophic fungal pathogen Botrytis cinerea, functions as a PCD-promoting protease that is released from the ER body or vacuole to the cytoplasm. Accumulates in endoplasmic reticulum-derived bodies in epidermal cells and may participate in cell death in stressed or injured cells. Involved in water stress-induced cell death through its protease activity that is released to the cytoplasm after vacuolar collapse. Possesses protease activity in vitro and is involved in cell death in the transmitting tract and septum epidermis during flower development. Possesses peptide ligase activity. Can ligate peptides to unmodified N-termini of acceptor proteins. Probably ligates through a thioester intermediate. The sequence is that of Cysteine proteinase RD21A from Arabidopsis thaliana (Mouse-ear cress).